Consider the following 549-residue polypeptide: Glucose-6-phosphate isomerase (549 aa).

Residue glutamate 355 is the Proton donor of the active site. Active-site residues include histidine 386 and lysine 514.

The protein belongs to the GPI family.

The protein localises to the cytoplasm. It carries out the reaction alpha-D-glucose 6-phosphate = beta-D-fructose 6-phosphate. Its pathway is carbohydrate biosynthesis; gluconeogenesis. The protein operates within carbohydrate degradation; glycolysis; D-glyceraldehyde 3-phosphate and glycerone phosphate from D-glucose: step 2/4. In terms of biological role, catalyzes the reversible isomerization of glucose-6-phosphate to fructose-6-phosphate. The polypeptide is Glucose-6-phosphate isomerase (Klebsiella pneumoniae subsp. pneumoniae (strain ATCC 700721 / MGH 78578)).